We begin with the raw amino-acid sequence, 421 residues long: Queuine tRNA-ribosyltransferase accessory subunit 2 (421 aa).

Zn(2+) contacts are provided by Cys-328, Cys-330, Cys-333, and His-359.

It belongs to the queuine tRNA-ribosyltransferase family. QTRT2 subfamily. Heterodimer of a catalytic subunit and an accessory subunit. Requires Zn(2+) as cofactor.

It localises to the cytoplasm. Non-catalytic subunit of the queuine tRNA-ribosyltransferase (TGT) that catalyzes the base-exchange of a guanine (G) residue with queuine (Q) at position 34 (anticodon wobble position) in tRNAs with GU(N) anticodons (tRNA-Asp, -Asn, -His and -Tyr), resulting in the hypermodified nucleoside queuosine (7-(((4,5-cis-dihydroxy-2-cyclopenten-1-yl)amino)methyl)-7-deazaguanosine). The polypeptide is Queuine tRNA-ribosyltransferase accessory subunit 2 (Aedes aegypti (Yellowfever mosquito)).